Consider the following 290-residue polypeptide: Diaminopimelate epimerase (290 aa).

Positions 17, 49, and 69 each coordinate substrate. C78 acts as the Proton donor in catalysis. Residues 79–80 (GN), N166, N199, and 217–218 (ER) contribute to the substrate site. C226 functions as the Proton acceptor in the catalytic mechanism. 227–228 (GS) is a substrate binding site.

This sequence belongs to the diaminopimelate epimerase family. Homodimer.

The protein localises to the cytoplasm. It catalyses the reaction (2S,6S)-2,6-diaminopimelate = meso-2,6-diaminopimelate. Its pathway is amino-acid biosynthesis; L-lysine biosynthesis via DAP pathway; DL-2,6-diaminopimelate from LL-2,6-diaminopimelate: step 1/1. Functionally, catalyzes the stereoinversion of LL-2,6-diaminopimelate (L,L-DAP) to meso-diaminopimelate (meso-DAP), a precursor of L-lysine and an essential component of the bacterial peptidoglycan. The chain is Diaminopimelate epimerase from Nitrobacter hamburgensis (strain DSM 10229 / NCIMB 13809 / X14).